A 99-amino-acid polypeptide reads, in one-letter code: Small integral membrane protein 9 (99 aa).

A signal peptide spans 1 to 26 (MEPQKLLIIGFLLCSLTCLLLETVAS). Topologically, residues 27-73 (SPLPLSALGIQEKTGSKPRSGGNHRSWLNNFRDYLWQLIKSALPPAA) are extracellular. A helical transmembrane segment spans residues 74–94 (IVAFLLTSALMGILCCFTILV). At 95–99 (VDPVH) the chain is on the cytoplasmic side.

The protein resides in the cell membrane. This Homo sapiens (Human) protein is Small integral membrane protein 9 (SMIM9).